The following is a 62-amino-acid chain: Small ribosomal subunit protein bS21 (62 aa).

The protein belongs to the bacterial ribosomal protein bS21 family.

This chain is Small ribosomal subunit protein bS21 (rpsU), found in Mycoplasma genitalium (strain ATCC 33530 / DSM 19775 / NCTC 10195 / G37) (Mycoplasmoides genitalium).